The sequence spans 99 residues: Large ribosomal subunit protein eL30 (99 aa).

Belongs to the eukaryotic ribosomal protein eL30 family.

This chain is Large ribosomal subunit protein eL30 (rpl30e), found in Pyrococcus horikoshii (strain ATCC 700860 / DSM 12428 / JCM 9974 / NBRC 100139 / OT-3).